The sequence spans 124 residues: Small ribosomal subunit protein uS12 (124 aa).

The interval 1-30 is disordered; it reads MPTIQQLVRKGRRDKVAKVKTAALKGSPQR. The residue at position 89 (Asp-89) is a 3-methylthioaspartic acid. A disordered region spans residues 105-124; sequence QGVKNRKQARSRYGAKKEKS. Residues 108 to 118 show a composition bias toward basic residues; the sequence is KNRKQARSRYG.

The protein belongs to the universal ribosomal protein uS12 family. In terms of assembly, part of the 30S ribosomal subunit. Contacts proteins S8 and S17. May interact with IF1 in the 30S initiation complex.

In terms of biological role, with S4 and S5 plays an important role in translational accuracy. Interacts with and stabilizes bases of the 16S rRNA that are involved in tRNA selection in the A site and with the mRNA backbone. Located at the interface of the 30S and 50S subunits, it traverses the body of the 30S subunit contacting proteins on the other side and probably holding the rRNA structure together. The combined cluster of proteins S8, S12 and S17 appears to hold together the shoulder and platform of the 30S subunit. This Mycobacterium intracellulare protein is Small ribosomal subunit protein uS12.